Consider the following 49-residue polypeptide: Large ribosomal subunit protein bL33A (49 aa).

Belongs to the bacterial ribosomal protein bL33 family.

This is Large ribosomal subunit protein bL33A from Staphylococcus aureus (strain Mu3 / ATCC 700698).